Here is a 120-residue protein sequence, read N- to C-terminus: Large ribosomal subunit protein uL18 (120 aa).

It belongs to the universal ribosomal protein uL18 family. As to quaternary structure, part of the 50S ribosomal subunit; part of the 5S rRNA/L5/L18/L25 subcomplex. Contacts the 5S and 23S rRNAs.

Its function is as follows. This is one of the proteins that bind and probably mediate the attachment of the 5S RNA into the large ribosomal subunit, where it forms part of the central protuberance. The protein is Large ribosomal subunit protein uL18 of Azorhizobium caulinodans (strain ATCC 43989 / DSM 5975 / JCM 20966 / LMG 6465 / NBRC 14845 / NCIMB 13405 / ORS 571).